Reading from the N-terminus, the 1209-residue chain is Sterol 3-beta-glucosyltransferase (1209 aa).

Residues 167 to 217 (ERLIKKFLPNDDEKYIEEYPCWLLRDIMIQGHAYLTNKHLFFFAFIPNFES) form the GRAM 1 domain. One can recognise a PH domain in the interval 218–315 (DFNVTGSLRL…WVSSIKKQMF (98 aa)). Residues 568–634 (VRFRQHFSFD…EDVENCYKET (67 aa)) form the GRAM 2 domain. UDP-alpha-D-glucose is bound by residues serine 745, arginine 746, aspartate 748, asparagine 1019, valine 1048, histidine 1050, histidine 1063, serine 1066, glycine 1067, threonine 1068, aspartate 1087, and glutamine 1088. The disordered stretch occupies residues 1186–1209 (AKGNEKEEYSSEGSGSNDGSWLLI). Residues 1196 to 1209 (SEGSGSNDGSWLLI) show a composition bias toward low complexity.

This sequence belongs to the glycosyltransferase 28 family.

Its subcellular location is the cytoplasm. The protein localises to the membrane. It carries out the reaction a sterol + UDP-alpha-D-glucose = a sterol 3-beta-D-glucoside + UDP + H(+). It catalyses the reaction ergosterol + UDP-alpha-D-glucose = ergosteryl 3-beta-D-glucoside + UDP + H(+). Its function is as follows. Sterol glycosyltransferase responsible for the glycosylation of ergosterol to form ergosterol-glucoside. In Kluyveromyces lactis (strain ATCC 8585 / CBS 2359 / DSM 70799 / NBRC 1267 / NRRL Y-1140 / WM37) (Yeast), this protein is Sterol 3-beta-glucosyltransferase.